A 300-amino-acid chain; its full sequence is Lipoyl synthase 2 (300 aa).

[4Fe-4S] cluster is bound by residues C46, C51, C57, C72, C76, C79, and S294. The Radical SAM core domain occupies 58–283 (YAQKTATFLL…GKLAREMGFS (226 aa)).

It belongs to the radical SAM superfamily. Lipoyl synthase family. Requires [4Fe-4S] cluster as cofactor.

The protein localises to the cytoplasm. The enzyme catalyses [[Fe-S] cluster scaffold protein carrying a second [4Fe-4S](2+) cluster] + N(6)-octanoyl-L-lysyl-[protein] + 2 oxidized [2Fe-2S]-[ferredoxin] + 2 S-adenosyl-L-methionine + 4 H(+) = [[Fe-S] cluster scaffold protein] + N(6)-[(R)-dihydrolipoyl]-L-lysyl-[protein] + 4 Fe(3+) + 2 hydrogen sulfide + 2 5'-deoxyadenosine + 2 L-methionine + 2 reduced [2Fe-2S]-[ferredoxin]. It participates in protein modification; protein lipoylation via endogenous pathway; protein N(6)-(lipoyl)lysine from octanoyl-[acyl-carrier-protein]: step 2/2. Catalyzes the radical-mediated insertion of two sulfur atoms into the C-6 and C-8 positions of the octanoyl moiety bound to the lipoyl domains of lipoate-dependent enzymes, thereby converting the octanoylated domains into lipoylated derivatives. The protein is Lipoyl synthase 2 of Nostoc sp. (strain PCC 7120 / SAG 25.82 / UTEX 2576).